The primary structure comprises 757 residues: 5-methyltetrahydropteroyltriglutamate--homocysteine methyltransferase (757 aa).

5-methyltetrahydropteroyltri-L-glutamate contacts are provided by residues 15-18 (RELK) and lysine 114. L-homocysteine contacts are provided by residues 428–430 (IGS) and glutamate 481. Residues 428-430 (IGS) and glutamate 481 each bind L-methionine. Residues 512–513 (RC) and tryptophan 558 each bind 5-methyltetrahydropteroyltri-L-glutamate. Aspartate 596 lines the L-homocysteine pocket. Residue aspartate 596 participates in L-methionine binding. Glutamate 602 is a 5-methyltetrahydropteroyltri-L-glutamate binding site. Residues histidine 639, cysteine 641, and glutamate 663 each contribute to the Zn(2+) site. Residue histidine 692 is the Proton donor of the active site. Zn(2+) is bound at residue cysteine 724.

Belongs to the vitamin-B12 independent methionine synthase family. Zn(2+) serves as cofactor.

The catalysed reaction is 5-methyltetrahydropteroyltri-L-glutamate + L-homocysteine = tetrahydropteroyltri-L-glutamate + L-methionine. It participates in amino-acid biosynthesis; L-methionine biosynthesis via de novo pathway; L-methionine from L-homocysteine (MetE route): step 1/1. Its function is as follows. Catalyzes the transfer of a methyl group from 5-methyltetrahydrofolate to homocysteine resulting in methionine formation. The chain is 5-methyltetrahydropteroyltriglutamate--homocysteine methyltransferase from Lactococcus lactis subsp. cremoris (strain MG1363).